A 380-amino-acid polypeptide reads, in one-letter code: Alpha-glucoside transport system permease protein AglG (380 aa).

Helical transmembrane passes span 13–33, 179–199, 202–222, 239–259, 288–308, and 344–364; these read VHLSVLLLVLLWTLPTAGLLI, VIPILIAAFAAYALAWMPFPG, VLLAVVVGLLVVPLQMSLIPL, TYMGIWLAHTGFGLPLAIYLL, IILPLSFPALASFAIFQFLWT, and EILTASAFITIVVPLIVFFAL. One can recognise an ABC transmembrane type-1 domain in the interval 167–364; sequence FLNSLTVAVP…VVPLIVFFAL (198 aa).

Belongs to the binding-protein-dependent transport system permease family. MalFG subfamily.

The protein resides in the cell inner membrane. Functionally, part of the binding-protein-dependent transport system for alpha-glucosides such as sucrose, maltose and trehalose. Probably responsible for the translocation of the substrate across the membrane. The chain is Alpha-glucoside transport system permease protein AglG (aglG) from Rhizobium meliloti (strain 1021) (Ensifer meliloti).